Here is a 104-residue protein sequence, read N- to C-terminus: L-rhamnose mutarotase (104 aa).

Tyr-18 is a binding site for substrate. His-22 serves as the catalytic Proton donor. Substrate is bound by residues Tyr-41 and 76-77 (WW).

This sequence belongs to the rhamnose mutarotase family. Homodimer.

Its subcellular location is the cytoplasm. The catalysed reaction is alpha-L-rhamnose = beta-L-rhamnose. It participates in carbohydrate metabolism; L-rhamnose metabolism. In terms of biological role, involved in the anomeric conversion of L-rhamnose. This is L-rhamnose mutarotase from Enterobacter sp. (strain 638).